The following is a 123-amino-acid chain: MINQANKTAKLRVKRAVRVRKHLRGTGLKPRLCVVKSNSHIQAQLIDDETGTTLGGTATFAKEYRNTEFCKKNKASARKLGEQIAEIAKSKNIKEVVFDRGPFKYHGILAELANAARAGGLQF.

It belongs to the universal ribosomal protein uL18 family. Part of the 50S ribosomal subunit; part of the 5S rRNA/L5/L18/L25 subcomplex. Contacts the 5S and 23S rRNAs.

This is one of the proteins that bind and probably mediate the attachment of the 5S RNA into the large ribosomal subunit, where it forms part of the central protuberance. The chain is Large ribosomal subunit protein uL18 from Protochlamydia amoebophila (strain UWE25).